The primary structure comprises 120 residues: Small ribosomal subunit protein uS13m (120 aa).

Belongs to the universal ribosomal protein uS13 family. In terms of assembly, part of the small ribosomal subunit.

It is found in the mitochondrion. Its function is as follows. Located at the top of the head of the small subunit, it contacts several helices of the 18S rRNA. This is Small ribosomal subunit protein uS13m (RPS13) from Marchantia polymorpha (Common liverwort).